Here is a 296-residue protein sequence, read N- to C-terminus: Nitrogenase iron protein (296 aa).

Residue 11–18 coordinates ATP; that stretch reads GKGGIGKS. Cysteine 99 is a binding site for [4Fe-4S] cluster. Arginine 102 carries the post-translational modification ADP-ribosylarginine; by dinitrogenase reductase ADP-ribosyltransferase. Cysteine 134 is a [4Fe-4S] cluster binding site.

The protein belongs to the NifH/BchL/ChlL family. As to quaternary structure, homodimer. [4Fe-4S] cluster is required as a cofactor. In terms of processing, the reversible ADP-ribosylation of Arg-102 inactivates the nitrogenase reductase and regulates nitrogenase activity.

The catalysed reaction is N2 + 8 reduced [2Fe-2S]-[ferredoxin] + 16 ATP + 16 H2O = H2 + 8 oxidized [2Fe-2S]-[ferredoxin] + 2 NH4(+) + 16 ADP + 16 phosphate + 6 H(+). The key enzymatic reactions in nitrogen fixation are catalyzed by the nitrogenase complex, which has 2 components: the iron protein and the molybdenum-iron protein. In Dechloromonas aromatica (strain RCB), this protein is Nitrogenase iron protein.